The primary structure comprises 288 residues: Protoheme IX farnesyltransferase (288 aa).

The next 9 helical transmembrane spans lie at 8-28 (ATKP…FLLA), 35-55 (YLIF…GCVL), 80-100 (ISIL…IYLL), 107-127 (LTML…TKCM), 132-152 (IYST…GYCA), 162-182 (LLLL…IAIL), 208-228 (IVIY…SGYT), 229-249 (TSYQ…YLAL), and 266-286 (FIFS…DSIF).

This sequence belongs to the UbiA prenyltransferase family. Protoheme IX farnesyltransferase subfamily.

It is found in the cell membrane. It catalyses the reaction heme b + (2E,6E)-farnesyl diphosphate + H2O = Fe(II)-heme o + diphosphate. The protein operates within porphyrin-containing compound metabolism; heme O biosynthesis; heme O from protoheme: step 1/1. Its function is as follows. Converts heme B (protoheme IX) to heme O by substitution of the vinyl group on carbon 2 of heme B porphyrin ring with a hydroxyethyl farnesyl side group. The chain is Protoheme IX farnesyltransferase from Baumannia cicadellinicola subsp. Homalodisca coagulata.